The primary structure comprises 558 residues: MESNNGTGAPGAFHTQQVDNAIRAIQHKRPLPEIDFTIHTMEDGSQVSTMERVCKDVQAPAMFKPSDEQFFEDETHTKPDIQFLKQHFYREGRLTEEQALWIIREGTKLLRAEPNLLEMDAPITVCGDVHGQYYDLMKLFEVGGDPAETRYLFLGDYVDRGYFSIECVLYLWALKIHYPKTLWLLRGNHECRHLTDYFTFKLECKHKYSEAIYEACMESFCCLPLAAVMNKQFLCIHGGLSPELHTLDDIRNIDRFREPPTQGLMCDILWADPLEDFGQEKTTDFFVHNHVRGCSYFFSYSAACHFLEKNNLLSIIRAHEAQDAGYRMYRKTRTTGFPSVMTIFSAPNYLDVYNNKAAVLKYENNVMNIRQFNCTPHPYWLPNFMDVFTWSLPFVGEKITDMLIAILSTCSEEELREDSATTSPGSASPALPSAANQDPDSIEFKRRAIKNKILAIGRLSRVFQVLREESERVTELKTVSGGRLPAGTLMLGAEGIKNAISSFEDARKVDLQNERLPPSHDEVVKMQDEERAQALERATREADNDKKLQTLSRRLSTS.

The Fe cation site is built by Asp-128, His-130, and Asp-156. 2 residues coordinate Zn(2+): Asp-156 and Asn-188. His-189 acts as the Proton donor in catalysis. Positions 237 and 319 each coordinate Zn(2+). Disordered regions lie at residues 415-439 (LRED…NQDP) and 534-558 (ALER…LSTS). Low complexity predominate over residues 420–435 (ATTSPGSASPALPSAA). A compositionally biased stretch (basic and acidic residues) spans 534–548 (ALERATREADNDKKL). The segment covering 549-558 (QTLSRRLSTS) has biased composition (polar residues).

This sequence belongs to the PPP phosphatase family. PP-2B subfamily. As to quaternary structure, composed of two components (A and B), the A component is the catalytic subunit and the B component confers calcium sensitivity. The cofactor is Fe(3+). Requires Zn(2+) as cofactor.

It catalyses the reaction O-phospho-L-seryl-[protein] + H2O = L-seryl-[protein] + phosphate. The catalysed reaction is O-phospho-L-threonyl-[protein] + H2O = L-threonyl-[protein] + phosphate. In terms of biological role, calcium-dependent, calmodulin-stimulated protein phosphatase. This subunit may have a role in the calmodulin activation of calcineurin. This chain is Serine/threonine-protein phosphatase 2B catalytic subunit (cna-1), found in Neurospora crassa (strain ATCC 24698 / 74-OR23-1A / CBS 708.71 / DSM 1257 / FGSC 987).